A 256-amino-acid chain; its full sequence is Small ribosomal subunit protein uS3 (256 aa).

The KH type-2 domain occupies isoleucine 39–threonine 121. The segment at arginine 227–alanine 256 is disordered. Residues proline 246–alanine 256 are compositionally biased toward basic and acidic residues.

Belongs to the universal ribosomal protein uS3 family. In terms of assembly, part of the 30S ribosomal subunit. Forms a tight complex with proteins S10 and S14.

In terms of biological role, binds the lower part of the 30S subunit head. Binds mRNA in the 70S ribosome, positioning it for translation. This Synechococcus sp. (strain JA-2-3B'a(2-13)) (Cyanobacteria bacterium Yellowstone B-Prime) protein is Small ribosomal subunit protein uS3.